We begin with the raw amino-acid sequence, 428 residues long: Adenylosuccinate synthetase (428 aa).

GTP contacts are provided by residues 12–18 (GDEGKGK) and 40–42 (GHT). Aspartate 13 (proton acceptor) is an active-site residue. Positions 13 and 40 each coordinate Mg(2+). Residues 13-16 (DEGK), 38-41 (NAGH), threonine 128, arginine 142, glutamine 223, threonine 238, and arginine 302 contribute to the IMP site. Catalysis depends on histidine 41, which acts as the Proton donor. 298–304 (VTTKRPR) lines the substrate pocket. GTP contacts are provided by residues arginine 304, 330 to 332 (KLD), and 412 to 414 (GVG).

It belongs to the adenylosuccinate synthetase family. As to quaternary structure, homodimer. Requires Mg(2+) as cofactor.

The protein localises to the cytoplasm. The enzyme catalyses IMP + L-aspartate + GTP = N(6)-(1,2-dicarboxyethyl)-AMP + GDP + phosphate + 2 H(+). The protein operates within purine metabolism; AMP biosynthesis via de novo pathway; AMP from IMP: step 1/2. Its function is as follows. Plays an important role in the de novo pathway of purine nucleotide biosynthesis. Catalyzes the first committed step in the biosynthesis of AMP from IMP. The sequence is that of Adenylosuccinate synthetase from Cutibacterium acnes (strain DSM 16379 / KPA171202) (Propionibacterium acnes).